The following is a 356-amino-acid chain: Mitogen-activated protein kinase PMK1 (356 aa).

The Protein kinase domain occupies 24–312; that stretch reads YDIQDVVGEG…VEEALKHPYL (289 aa). ATP-binding positions include 30 to 38 and K53; that span reads VGEGAYGVV.

It belongs to the protein kinase superfamily. CMGC Ser/Thr protein kinase family. MAP kinase subfamily. Mg(2+) serves as cofactor. Post-translationally, phosphorylated by MST7.

It carries out the reaction L-seryl-[protein] + ATP = O-phospho-L-seryl-[protein] + ADP + H(+). The enzyme catalyses L-threonyl-[protein] + ATP = O-phospho-L-threonyl-[protein] + ADP + H(+). Functionally, mitogen-activated protein kinase; part of the MST11-MST7-PMK1 MAP kinase (MAPK) cascade that is essential for appressorium formation, penetration and invasive growth. Central regulator of appressorium development that acts downstream of the cAMP signal. The MST11-MST7-PMK1 MAP kinase cascade transduces signals from the cell surface sensors MDB2 and SHO1 that recognize various surface signals such as surface hydrophobicity, cutin monomers, and rice leaf waxes. Regulates expression of secreted fungal effector proteins implicated of host immune defenses, preventing reactive oxygen species generation and excessive callose deposition at plasmodesmata. Furthermore, controls the hyphal constriction required for fungal growth from one rice cell to the neighboring cell, enabling host tissue colonization and blast disease. Targets downstream of the PMK1-MAPK pathway include transcription factor MST12 and pathogenicity-related genes GAS1 and GAS2, both of which are expressed during appressorium formation, even if regulation of MST12 is not associated with expression of GAS1 or GAS2. This Pyricularia oryzae (Rice blast fungus) protein is Mitogen-activated protein kinase PMK1.